The following is a 49-amino-acid chain: Large ribosomal subunit protein bL33C (49 aa).

Residues 21–49 are disordered; the sequence is KNKRNNPDRVEFKKYCPRDKKSTLHRETK. Residues 25–49 are compositionally biased toward basic and acidic residues; it reads NNPDRVEFKKYCPRDKKSTLHRETK.

This sequence belongs to the bacterial ribosomal protein bL33 family.

This chain is Large ribosomal subunit protein bL33C, found in Bacillus licheniformis (strain ATCC 14580 / DSM 13 / JCM 2505 / CCUG 7422 / NBRC 12200 / NCIMB 9375 / NCTC 10341 / NRRL NRS-1264 / Gibson 46).